Consider the following 180-residue polypeptide: Large ribosomal subunit protein uL5 (180 aa).

It belongs to the universal ribosomal protein uL5 family. Part of the 50S ribosomal subunit; part of the 5S rRNA/L5/L18/L25 subcomplex. Contacts the 5S rRNA and the P site tRNA. Forms a bridge to the 30S subunit in the 70S ribosome.

This is one of the proteins that bind and probably mediate the attachment of the 5S RNA into the large ribosomal subunit, where it forms part of the central protuberance. In the 70S ribosome it contacts protein S13 of the 30S subunit (bridge B1b), connecting the 2 subunits; this bridge is implicated in subunit movement. Contacts the P site tRNA; the 5S rRNA and some of its associated proteins might help stabilize positioning of ribosome-bound tRNAs. The protein is Large ribosomal subunit protein uL5 of Streptococcus pyogenes serotype M49 (strain NZ131).